The sequence spans 378 residues: uncharacterized protein (378 aa).

The next 10 membrane-spanning stretches (helical) occupy residues 7–29, 33–55, 68–85, 90–108, 115–137, 152–174, 204–225, 245–267, 280–302, and 347–366; these read VTPF…RLSQ, LFFV…YQII, VSYL…EFYT, SGSL…HLLL, PLTV…FLYL, LTVG…MLIM, NYKL…FLYL, IFLF…ASHA, LILY…PRIV, and FSPL…ALFL.

It localises to the cell membrane. This is an uncharacterized protein from Aquifex aeolicus (strain VF5).